The primary structure comprises 1029 residues: Putative B3 domain-containing protein Os03g0621600 (1029 aa).

3 DNA-binding regions (TF-B3) span residues 147–240, 339–430, and 450–543; these read DTYF…FDPS, VAVM…RKMK, and EKYF…FDPS. Positions 572–605 are disordered; the sequence is TSYHDQPKGNKHWMQKDSSSKGNKIGNTRSSNTP. Polar residues predominate over residues 591 to 605; that stretch reads SKGNKIGNTRSSNTP. Positions 731–824 form a DNA-binding region, TF-B3 4; it reads YKNFFKVMIG…KLKVLIFGPS (94 aa). Residues 852–867 show a composition bias toward polar residues; the sequence is SSNSHDLPVKSPQNVS. A disordered region spans residues 852–882; it reads SSNSHDLPVKSPQNVSKSEKQWDSSEQENDT. Residues 934-1029 constitute a DNA-binding region (TF-B3 5); sequence GCILRKSRVH…SMNVHIIPKK (96 aa).

It is found in the nucleus. The chain is Putative B3 domain-containing protein Os03g0621600 from Oryza sativa subsp. japonica (Rice).